Reading from the N-terminus, the 151-residue chain is Large ribosomal subunit protein bL9 (151 aa).

Belongs to the bacterial ribosomal protein bL9 family.

Binds to the 23S rRNA. This Bordetella pertussis (strain Tohama I / ATCC BAA-589 / NCTC 13251) protein is Large ribosomal subunit protein bL9.